Consider the following 130-residue polypeptide: Fluoride-specific ion channel FluC (130 aa).

Transmembrane regions (helical) follow at residues 2 to 22 (GLLLILVGIGGGLGAMSRFAL), 35 to 55 (IGILLCNIIGSLIIGMMAAFL), 72 to 92 (LFVTGFLGGFTTFSSFSLDIL), and 107 to 127 (ILVSVIVSLIAVILGFYFIMG). 2 residues coordinate Na(+): Gly79 and Thr82.

It belongs to the fluoride channel Fluc/FEX (TC 1.A.43) family.

The protein resides in the cell inner membrane. The enzyme catalyses fluoride(in) = fluoride(out). With respect to regulation, na(+) is not transported, but it plays an essential structural role and its presence is essential for fluoride channel function. Its function is as follows. Fluoride-specific ion channel. Important for reducing fluoride concentration in the cell, thus reducing its toxicity. The protein is Fluoride-specific ion channel FluC of Francisella philomiragia subsp. philomiragia (strain ATCC 25017 / CCUG 19701 / FSC 153 / O#319-036).